We begin with the raw amino-acid sequence, 393 residues long: Dual-specificity RNA methyltransferase RlmN (393 aa).

Catalysis depends on glutamate 114, which acts as the Proton acceptor. The region spanning 120–359 is the Radical SAM core domain; sequence EDDRATLCVS…VIVRKTRGDD (240 aa). A disulfide bridge connects residues cysteine 127 and cysteine 364. Cysteine 134, cysteine 138, and cysteine 141 together coordinate [4Fe-4S] cluster. S-adenosyl-L-methionine contacts are provided by residues 188 to 189, serine 220, 242 to 244, and asparagine 321; these read GE and SLH. Cysteine 364 functions as the S-methylcysteine intermediate in the catalytic mechanism.

Belongs to the radical SAM superfamily. RlmN family. It depends on [4Fe-4S] cluster as a cofactor.

It localises to the cytoplasm. It catalyses the reaction adenosine(2503) in 23S rRNA + 2 reduced [2Fe-2S]-[ferredoxin] + 2 S-adenosyl-L-methionine = 2-methyladenosine(2503) in 23S rRNA + 5'-deoxyadenosine + L-methionine + 2 oxidized [2Fe-2S]-[ferredoxin] + S-adenosyl-L-homocysteine. The catalysed reaction is adenosine(37) in tRNA + 2 reduced [2Fe-2S]-[ferredoxin] + 2 S-adenosyl-L-methionine = 2-methyladenosine(37) in tRNA + 5'-deoxyadenosine + L-methionine + 2 oxidized [2Fe-2S]-[ferredoxin] + S-adenosyl-L-homocysteine. Functionally, specifically methylates position 2 of adenine 2503 in 23S rRNA and position 2 of adenine 37 in tRNAs. m2A2503 modification seems to play a crucial role in the proofreading step occurring at the peptidyl transferase center and thus would serve to optimize ribosomal fidelity. The polypeptide is Dual-specificity RNA methyltransferase RlmN (Actinobacillus pleuropneumoniae serotype 5b (strain L20)).